Here is a 614-residue protein sequence, read N- to C-terminus: MIKKASLLTACSVTAFSAWAQDTSPDTLVVTAIRFEQPRSTVLAPTTVVTRQDIDRWQSTSVNDVLRRLPGVDITQNGGSGQLSSIFIRGTNASHVLVLIDGVRLNLAGVSGSADLSQFPIALVQRIEYIRGPRSAVYGSDAIGGVVNIITTRDEPGTEISAGWGSNSYQNYDVSTQQQLGDKTRVTLLGDYAHTHGYDVVAYGNTGTQAQTDNDGFLSKTLYGALEHNFTDAWSGFVRGYGYDNRTNYDAYYSPGSPLLDTRKLYSQSWDAGLRYNGELIKSQLITSYSHSKDYNYDPHYGRYDSSATLDEMKQYTVQWANNVIVGHGSIGAGVDWQKQTTTPGTGYVEDGYDQRNTGIYLTGLQQVGDFTFEGAARSDDNSQFGRHGTWQTSAGWEFIEGYRFIASYGTSYKAPNLGQLYGFYGNPNLDPEKSKQWEGAFEGLTAGVNWRISGYRNDVSDLIYYDDHTLKYYNEGKARIKGVEATANFDTGPLTHTVSYDYVDARNAITDTPLLRRAKQQVKYQLDWQLYDFDWGITYQYLGTRYDKDYSSYPYQTVKMGGVSLWDLAVAYPVTSHLTVRGKIANLFDKDYETVYGYQTAGREYTLSGSYTF.

The N-terminal stretch at 1–20 (MIKKASLLTACSVTAFSAWA) is a signal peptide. The short motif at 26–33 (DTLVVTAI) is the TonB box element. In terms of domain architecture, TBDR plug spans 38–152 (PRSTVLAPTT…IGGVVNIITT (115 aa)). Cyanocob(III)alamin contacts are provided by residues Leu-83, Ser-85, Asn-92, and 110-111 (VS). A TBDR beta-barrel domain is found at 155 to 614 (EPGTEISAGW…EYTLSGSYTF (460 aa)). 3 beta stranded membrane passes run 158 to 165 (TEISAGWG), 169 to 178 (YQNYDVSTQQ), and 184 to 195 (TRVTLLGDYAHT). Ca(2+) contacts are provided by Asp-199, Gln-211, Asp-213, and Asp-215. A run of 2 beta stranded transmembrane segments spans residues 217–227 (FLSKTLYGALE) and 232–248 (DAWS…NRTN). Positions 249 and 250 each coordinate Ca(2+). Ala-251 provides a ligand contact to cyanocob(III)alamin. Asp-261 contributes to the Ca(2+) binding site. 14 consecutive transmembrane segments (beta stranded) span residues 263-277 (RKLY…LRYN), 279-296 (ELIK…KDYN), 309-325 (TLDE…NNVI), 328-337 (HGSIGAGVDW), 353-369 (YDQR…QQVG), 371-381 (FTFEGAARSDD), 385-400 (FGRH…WEFI), 403-417 (YRFI…KAPN), 434-443 (KSKQWEGAFE), 449-458 (VNWRISGYRN), 473-490 (YYNE…TANF), 494-509 (PLTH…ARNA), 517-529 (RRAK…QLDW), and 535-550 (DWGI…YDKD). Thr-309 contacts cyanocob(III)alamin. Arg-517 serves as a coordination point for cyanocob(III)alamin. Residue Tyr-551 coordinates cyanocob(III)alamin. Beta stranded transmembrane passes span 558-572 (TVKM…LAVA), 585-596 (IANLFDKDYETV), and 602-614 (AGRE…SYTF). The TonB C-terminal box motif lies at 597–614 (YGYQTAGREYTLSGSYTF).

The protein belongs to the TonB-dependent receptor family. BtuB (TC 1.B.14.3.1) subfamily.

The protein resides in the cell outer membrane. Functionally, involved in the active translocation of vitamin B12 (cyanocobalamin) across the outer membrane to the periplasmic space. It derives its energy for transport by interacting with the trans-periplasmic membrane protein TonB. The chain is Vitamin B12 transporter BtuB from Shigella flexneri serotype 5b (strain 8401).